A 114-amino-acid chain; its full sequence is DNA-(apurinic or apyrimidinic site) endonuclease (114 aa).

Belongs to the apurinic/apyrimidinic endonuclease family. Interacts with host Ung; this interaction allows the viral AP endonuclease to localize to newly formed AP sites and cleave them, leading to inhibition of bacterial growth.

In terms of biological role, performs endonucleolytic cleavage at abasic sites, which are generated by the base-excision activity of host Ung. The cleavage generates a 5'-deoxyribose phosphate and 3'-hydroxyl end. The sites are specifically recognized through the formation of a complex with host Ung. The viral endonucleolytic activity damages the host DNA, blocks host DNA replication and induces cell division arrest. This may provide an advantage for the phage and save nucleotides for the viral replication since it specifically targets the host DNA, which possesses more misincorporated uracils than the viral genome. The polypeptide is DNA-(apurinic or apyrimidinic site) endonuclease (Escherichia phage T5 (Enterobacteria phage T5)).